We begin with the raw amino-acid sequence, 300 residues long: MILLEVNNRIIEETLALKFENAAAGNKPEAVEVTFADFDGVLYHISNPNGDKTKVMVSISLKFYKELQAHGADELLKRVYGSFLVNPESGYNVSLLYDLENLPASKDSIVHQAGMLKRNCFASVFEKYFQFQEEGKEGENRAVIHYRDDETMYVESKKDRVTVVFSTVFKDDDDVVIGKVFMQEFKEGRRASHTAPQVLFSHREPPLELKDTDAAVGDNIGYITFVLFPRHTNATARDNTINLIHTFRDYLHYHIKCSKAYIHTRMRAKTSDFLKVLNRARPDAEKKEMKTITRKTFSST.

An N6-acetyllysine mark is found at K275 and K295.

The protein belongs to the ARPC2 family. Component of the Arp2/3 complex composed of ACTR2/ARP2, ACTR3/ARP3, ARPC1B/p41-ARC, ARPC2/p34-ARC, ARPC3/p21-ARC, ARPC4/p20-ARC and ARPC5/p16-ARC. Interacts with SHANK3; the interaction probably mediates the association of SHANK3 with the Arp2/3 complex.

It localises to the cytoplasm. The protein localises to the cytoskeleton. The protein resides in the cell projection. Its subcellular location is the synapse. It is found in the synaptosome. It localises to the nucleus. Its function is as follows. Actin-binding component of the Arp2/3 complex, a multiprotein complex that mediates actin polymerization upon stimulation by nucleation-promoting factor (NPF). The Arp2/3 complex mediates the formation of branched actin networks in the cytoplasm, providing the force for cell motility. Seems to contact the mother actin filament. In addition to its role in the cytoplasmic cytoskeleton, the Arp2/3 complex also promotes actin polymerization in the nucleus, thereby regulating gene transcription and repair of damaged DNA. The Arp2/3 complex promotes homologous recombination (HR) repair in response to DNA damage by promoting nuclear actin polymerization, leading to drive motility of double-strand breaks (DSBs). The chain is Actin-related protein 2/3 complex subunit 2 from Rattus norvegicus (Rat).